A 159-amino-acid chain; its full sequence is Ribosomal RNA large subunit methyltransferase H (159 aa).

Residues Gly108 and 127–132 (FSKMTF) contribute to the S-adenosyl-L-methionine site.

The protein belongs to the RNA methyltransferase RlmH family. In terms of assembly, homodimer.

The protein resides in the cytoplasm. It carries out the reaction pseudouridine(1915) in 23S rRNA + S-adenosyl-L-methionine = N(3)-methylpseudouridine(1915) in 23S rRNA + S-adenosyl-L-homocysteine + H(+). Specifically methylates the pseudouridine at position 1915 (m3Psi1915) in 23S rRNA. This is Ribosomal RNA large subunit methyltransferase H from Clostridium acetobutylicum (strain ATCC 824 / DSM 792 / JCM 1419 / IAM 19013 / LMG 5710 / NBRC 13948 / NRRL B-527 / VKM B-1787 / 2291 / W).